A 735-amino-acid chain; its full sequence is Ribosomal RNA large subunit methyltransferase K/L (735 aa).

The THUMP domain maps to 45 to 156 (DGYRACLWSR…RDSLSFSLDL (112 aa)).

It belongs to the methyltransferase superfamily. RlmKL family.

It is found in the cytoplasm. The catalysed reaction is guanosine(2445) in 23S rRNA + S-adenosyl-L-methionine = N(2)-methylguanosine(2445) in 23S rRNA + S-adenosyl-L-homocysteine + H(+). It catalyses the reaction guanosine(2069) in 23S rRNA + S-adenosyl-L-methionine = N(2)-methylguanosine(2069) in 23S rRNA + S-adenosyl-L-homocysteine + H(+). Specifically methylates the guanine in position 2445 (m2G2445) and the guanine in position 2069 (m7G2069) of 23S rRNA. In Allochromatium vinosum (strain ATCC 17899 / DSM 180 / NBRC 103801 / NCIMB 10441 / D) (Chromatium vinosum), this protein is Ribosomal RNA large subunit methyltransferase K/L.